The primary structure comprises 273 residues: Lactose transport system permease protein LacG (273 aa).

Helical transmembrane passes span 15–35 (YSVLSLAAFLSIFPFIWMVIG), 77–97 (IALVGTALTLLVSSLAGYGFE), 110–130 (VILLTLMVPFAALMIPLFMLM), 134–154 (GLLNTHIAIMLPMIASAFIIF), 182–204 (FFYIYVPVMRSTYAAAFVIVFML), and 240–260 (GTVMIGTILATLPTLLVFFAM). Residues 71-260 (FWNSVKIALV…LPTLLVFFAM (190 aa)) enclose the ABC transmembrane type-1 domain.

This sequence belongs to the binding-protein-dependent transport system permease family. MalFG subfamily.

The protein resides in the cell inner membrane. Its function is as follows. Part of the binding-protein-dependent transport system for lactose. Probably responsible for the translocation of the substrate across the membrane. The polypeptide is Lactose transport system permease protein LacG (lacG) (Rhizobium radiobacter (Agrobacterium tumefaciens)).